We begin with the raw amino-acid sequence, 239 residues long: 1-(5-phosphoribosyl)-5-[(5-phosphoribosylamino)methylideneamino] imidazole-4-carboxamide isomerase (239 aa).

Asp-8 acts as the Proton acceptor in catalysis. Catalysis depends on Asp-129, which acts as the Proton donor.

Belongs to the HisA/HisF family.

The protein resides in the cytoplasm. It carries out the reaction 1-(5-phospho-beta-D-ribosyl)-5-[(5-phospho-beta-D-ribosylamino)methylideneamino]imidazole-4-carboxamide = 5-[(5-phospho-1-deoxy-D-ribulos-1-ylimino)methylamino]-1-(5-phospho-beta-D-ribosyl)imidazole-4-carboxamide. It functions in the pathway amino-acid biosynthesis; L-histidine biosynthesis; L-histidine from 5-phospho-alpha-D-ribose 1-diphosphate: step 4/9. This chain is 1-(5-phosphoribosyl)-5-[(5-phosphoribosylamino)methylideneamino] imidazole-4-carboxamide isomerase, found in Bacillus cereus (strain ATCC 10987 / NRS 248).